Here is a 317-residue protein sequence, read N- to C-terminus: Beta-ketoacyl-[acyl-carrier-protein] synthase III (317 aa).

Active-site residues include C112 and H244. Positions 245–249 (QANIR) are ACP-binding. Residue N274 is part of the active site.

It belongs to the thiolase-like superfamily. FabH family. Homodimer.

The protein resides in the cytoplasm. The catalysed reaction is malonyl-[ACP] + acetyl-CoA + H(+) = 3-oxobutanoyl-[ACP] + CO2 + CoA. The protein operates within lipid metabolism; fatty acid biosynthesis. In terms of biological role, catalyzes the condensation reaction of fatty acid synthesis by the addition to an acyl acceptor of two carbons from malonyl-ACP. Catalyzes the first condensation reaction which initiates fatty acid synthesis and may therefore play a role in governing the total rate of fatty acid production. Possesses both acetoacetyl-ACP synthase and acetyl transacylase activities. Its substrate specificity determines the biosynthesis of branched-chain and/or straight-chain of fatty acids. The chain is Beta-ketoacyl-[acyl-carrier-protein] synthase III from Rickettsia felis (strain ATCC VR-1525 / URRWXCal2) (Rickettsia azadi).